A 734-amino-acid chain; its full sequence is ATP-dependent RNA helicase SUV3L, mitochondrial (734 aa).

The N-terminal 60 residues, 1 to 60 (MAAAAAIAAALLRRSTSSQHHRRILLLPLLSHLQRAAPRSPSPWDPPPHHRFFFSSDVTA), are a transit peptide targeting the mitochondrion. Residues 58–88 (VTAEGDSKPRPPLDGKQLWREVSTSEPATGA) form a disordered region. Residues 62–76 (GDSKPRPPLDGKQLW) show a composition bias toward basic and acidic residues. A Helicase ATP-binding domain is found at 198–356 (FARAMRRRVV…RFKPLVVEAK (159 aa)). 211–218 (GPTNSGKT) serves as a coordination point for ATP. Residues 357–525 (TLLGDLKNVR…SFAIQFPDLT (169 aa)) enclose the Helicase C-terminal domain. Asn594 and Asn614 each carry an N-linked (GlcNAc...) asparagine glycan. A disordered region spans residues 667 to 734 (ASWKPTSRQQ…QDPSSLNFVA (68 aa)). The segment covering 684-693 (EEDNDVEQAS) has biased composition (acidic residues). Residues 695-709 (DNAKNDSEDGYERSI) show a composition bias toward basic and acidic residues. An N-linked (GlcNAc...) asparagine glycan is attached at Asn699. Over residues 725-734 (QDPSSLNFVA) the composition is skewed to polar residues.

This sequence belongs to the helicase family. Homodimer; in free form. Component of the mitochondrial degradosome (mtEXO) complex which is a heteropentamer containing 2 copies of SUPV3L1 and 3 copies of PNPT1. The cofactor is Mg(2+). Mn(2+) is required as a cofactor.

It localises to the nucleus. The protein resides in the mitochondrion matrix. Its subcellular location is the mitochondrion nucleoid. The enzyme catalyses ATP + H2O = ADP + phosphate + H(+). Its function is as follows. Major helicase player in mitochondrial RNA metabolism. Component of the mitochondrial degradosome (mtEXO) complex, that degrades 3' overhang double-stranded RNA with a 3'-to-5' directionality in an ATP-dependent manner. ATPase and ATP-dependent multisubstrate helicase, able to unwind double-stranded (ds) DNA and RNA, and RNA/DNA heteroduplexes in the 5'-to-3' direction. Plays a role in the RNA surveillance system in mitochondria; regulates the stability of mature mRNAs, the removal of aberrantly formed mRNAs and the rapid degradation of non coding processing intermediates. Confers salinity and drought stress tolerances by maintaining both photosynthesis and antioxidant machinery, probably via an increase in plant hormones levels such as gibberellic acid (GA(3)), the cytokinin zeatin (Z) and indole-3-acetic acid (IAA). This Oryza sativa subsp. japonica (Rice) protein is ATP-dependent RNA helicase SUV3L, mitochondrial.